Here is a 289-residue protein sequence, read N- to C-terminus: uncharacterized protein (289 aa).

The region spanning 2–62 (NEKKERIIKT…SACEYYIGMS (61 aa)) is the HTH tetR-type domain. A DNA-binding region (H-T-H motif) is located at residues 25–44 (TIQEIASECGISKGAFYLHF).

This is an uncharacterized protein from Bacillus subtilis (strain 168).